We begin with the raw amino-acid sequence, 188 residues long: Peptidyl-tRNA hydrolase (188 aa).

F15 contacts tRNA. The active-site Proton acceptor is the H20. Residues Y64, N66, and N112 each coordinate tRNA.

It belongs to the PTH family. Monomer.

It is found in the cytoplasm. It carries out the reaction an N-acyl-L-alpha-aminoacyl-tRNA + H2O = an N-acyl-L-amino acid + a tRNA + H(+). In terms of biological role, hydrolyzes ribosome-free peptidyl-tRNAs (with 1 or more amino acids incorporated), which drop off the ribosome during protein synthesis, or as a result of ribosome stalling. Catalyzes the release of premature peptidyl moieties from peptidyl-tRNA molecules trapped in stalled 50S ribosomal subunits, and thus maintains levels of free tRNAs and 50S ribosomes. This is Peptidyl-tRNA hydrolase from Borrelia recurrentis (strain A1).